Reading from the N-terminus, the 330-residue chain is Beta-ketoacyl-[acyl-carrier-protein] synthase III (330 aa).

Active-site residues include cysteine 114 and histidine 257. An ACP-binding region spans residues 258-262; that stretch reads QANLR. The active site involves asparagine 287.

Belongs to the thiolase-like superfamily. FabH family. As to quaternary structure, homodimer.

It localises to the cytoplasm. The catalysed reaction is malonyl-[ACP] + acetyl-CoA + H(+) = 3-oxobutanoyl-[ACP] + CO2 + CoA. The protein operates within lipid metabolism; fatty acid biosynthesis. Its function is as follows. Catalyzes the condensation reaction of fatty acid synthesis by the addition to an acyl acceptor of two carbons from malonyl-ACP. Catalyzes the first condensation reaction which initiates fatty acid synthesis and may therefore play a role in governing the total rate of fatty acid production. Possesses both acetoacetyl-ACP synthase and acetyl transacylase activities. Its substrate specificity determines the biosynthesis of branched-chain and/or straight-chain of fatty acids. The protein is Beta-ketoacyl-[acyl-carrier-protein] synthase III of Nitratidesulfovibrio vulgaris (strain ATCC 29579 / DSM 644 / CCUG 34227 / NCIMB 8303 / VKM B-1760 / Hildenborough) (Desulfovibrio vulgaris).